A 339-amino-acid chain; its full sequence is Undecaprenyl-phosphate 4-deoxy-4-formamido-L-arabinose transferase (339 aa).

Helical transmembrane passes span 235–255 and 269–289; these read LSLV…FLLV and LFVL…GMGL.

Belongs to the glycosyltransferase 2 family.

The protein resides in the cell inner membrane. It catalyses the reaction UDP-4-deoxy-4-formamido-beta-L-arabinose + di-trans,octa-cis-undecaprenyl phosphate = 4-deoxy-4-formamido-alpha-L-arabinopyranosyl di-trans,octa-cis-undecaprenyl phosphate + UDP. It functions in the pathway glycolipid biosynthesis; 4-amino-4-deoxy-alpha-L-arabinose undecaprenyl phosphate biosynthesis; 4-amino-4-deoxy-alpha-L-arabinose undecaprenyl phosphate from UDP-4-deoxy-4-formamido-beta-L-arabinose and undecaprenyl phosphate: step 1/2. The protein operates within bacterial outer membrane biogenesis; lipopolysaccharide biosynthesis. Functionally, catalyzes the transfer of 4-deoxy-4-formamido-L-arabinose from UDP to undecaprenyl phosphate. The modified arabinose is attached to lipid A and is required for resistance to polymyxin and cationic antimicrobial peptides. The polypeptide is Undecaprenyl-phosphate 4-deoxy-4-formamido-L-arabinose transferase (Pseudomonas aeruginosa (strain LESB58)).